We begin with the raw amino-acid sequence, 620 residues long: MAAATADPGAGSPQVGDSSGGATGCGLPSPGEQELSRRLQRLYPAVNQHETPLPRSWSPKDKYNYIGLSQGNLRVHYKGHGKNHKDAASVRATHPIPAACGIYYFEVKIVSKGRDGYMGIGLSAQGVNMNRLPGWDKHSYGYHGDDGHSFCSSGTGQPYGPTFTTGDVIGCCVNLINGTCFYTKNGHSLGIAFTDLPANLYPTVGLQTPGEIVDANFGQQPFLFDIEDYMREWRAKVQGTVHCFPISARLGEWQAVLQNMVSSYLVHHGYCATATAFARMTETPIQEEQASIKNRQKIQKLVLEGRVGEAIETTQRFYPGLLEHNPNLLFMLKCRQFVEMVNGTDSEVRSLSSRSPKSQDSYPGSPSLSPRHGPTSSHTHNTGADSPSCSNGVASTKSKQNHSKYPAPSSSSSSSSSSSSSSPSSVNYSESNSTDSTKSQPHSSTSNQETSDSEMEMEAEHYPNGVLESMSTRIVNGAYKHEDLQTDESSMDDGHPRRQLCGGNQAATERIILFGRELQALSEQLGREYGKDLAHTEMLQDAFSLLAYSDPWSCPVGQQLDPIQREPVCAALNSAILESQNLPKQPPLMLALGQASECLRLMARAGLGSCSFARVDDYLH.

A disordered region spans residues 1-34 (MAAATADPGAGSPQVGDSSGGATGCGLPSPGEQE). Position 2 is an N-acetylalanine (alanine 2). One can recognise a B30.2/SPRY domain in the interval 35-222 (LSRRLQRLYP…VDANFGQQPF (188 aa)). Residues 253-285 (WQAVLQNMVSSYLVHHGYCATATAFARMTETPI) enclose the LisH domain. The 58-residue stretch at 291-348 (SIKNRQKIQKLVLEGRVGEAIETTQRFYPGLLEHNPNLLFMLKCRQFVEMVNGTDSEV) folds into the CTLH domain. A compositionally biased stretch (polar residues) spans 347–398 (EVRSLSSRSPKSQDSYPGSPSLSPRHGPTSSHTHNTGADSPSCSNGVASTKS). A disordered region spans residues 347–459 (EVRSLSSRSP…TSDSEMEMEA (113 aa)). Serine 361 bears the Phosphoserine mark. Tyrosine 362 bears the Phosphotyrosine mark. Phosphoserine is present on residues serine 365, serine 367, serine 369, and serine 422. Low complexity predominate over residues 409–436 (SSSSSSSSSSSSSSPSSVNYSESNSTDS). Over residues 437-450 (TKSQPHSSTSNQET) the composition is skewed to polar residues. Serine 451 and serine 453 each carry phosphoserine.

The protein belongs to the RANBP9/10 family. As to quaternary structure, may form homodimers. Identified in the CTLH complex that contains GID4, RANBP9 and/or RANBP10, MKLN1, MAEA, RMND5A (or alternatively its paralog RMND5B), GID8, ARMC8, WDR26 and YPEL5. Within this complex, MAEA, RMND5A (or alternatively its paralog RMND5B), GID8, WDR26, and RANBP9 and/or RANBP10 form the catalytic core, while GID4, MKLN1, ARMC8 and YPEL5 have ancillary roles. Interacts with RAN and RANBP9. Interacts with the HGF receptor MET. Interacts with AR. Interacts with TUBB1. Interacts with YPEL5. May interact with TUBB5. Interacts with DDX4.

It is found in the cytoplasm. Its subcellular location is the cytosol. It localises to the nucleus. Its function is as follows. May act as an adapter protein to couple membrane receptors to intracellular signaling pathways. Core component of the CTLH E3 ubiquitin-protein ligase complex that selectively accepts ubiquitin from UBE2H and mediates ubiquitination and subsequent proteasomal degradation of the transcription factor HBP1. Enhances dihydrotestosterone-induced transactivation activity of AR, as well as dexamethasone-induced transactivation activity of NR3C1, but does not affect estrogen-induced transactivation. Acts as a guanine nucleotide exchange factor (GEF) for RAN GTPase. May play an essential role in hemostasis and in maintaining microtubule dynamics with respect to both platelet shape and function. The chain is Ran-binding protein 10 (RANBP10) from Bos taurus (Bovine).